A 423-amino-acid polypeptide reads, in one-letter code: Mannose-6-phosphate isomerase (423 aa).

A2 carries the post-translational modification N-acetylalanine. Residues S102 and S108 each carry the phosphoserine modification. 4 residues coordinate Zn(2+): Q110, H112, E137, and H276. Residue R295 is part of the active site.

It belongs to the mannose-6-phosphate isomerase type 1 family. It depends on Zn(2+) as a cofactor.

Its subcellular location is the cytoplasm. The enzyme catalyses D-mannose 6-phosphate = D-fructose 6-phosphate. It functions in the pathway nucleotide-sugar biosynthesis; GDP-alpha-D-mannose biosynthesis; alpha-D-mannose 1-phosphate from D-fructose 6-phosphate: step 1/2. Isomerase that catalyzes the interconversion of fructose-6-P and mannose-6-P and has a critical role in the supply of D-mannose derivatives required for many eukaryotic glycosylation reactions. The polypeptide is Mannose-6-phosphate isomerase (MPI) (Pan troglodytes (Chimpanzee)).